The chain runs to 545 residues: Glutamine-dependent NAD(+) synthetase (545 aa).

A CN hydrolase domain is found at 5 to 247 (LRIAMAQFDF…DQWLVVDYMR (243 aa)). E46 serves as the catalytic Proton acceptor; for glutaminase activity. Residue K113 is the For glutaminase activity of the active site. Y119 provides a ligand contact to L-glutamine. The Nucleophile; for glutaminase activity role is filled by C151. Positions 177 and 183 each coordinate L-glutamine. The interval 269–545 (VWRAVVRGVQ…RYPISNAYRG (277 aa)) is ligase. 292-299 (GLSGGIDS) serves as a coordination point for ATP. Residue N375 participates in deamido-NAD(+) binding. T399 is an ATP binding site. The deamido-NAD(+) site is built by E404 and K516.

It in the C-terminal section; belongs to the NAD synthetase family.

The enzyme catalyses deamido-NAD(+) + L-glutamine + ATP + H2O = L-glutamate + AMP + diphosphate + NAD(+) + H(+). Its pathway is cofactor biosynthesis; NAD(+) biosynthesis; NAD(+) from deamido-NAD(+) (L-Gln route): step 1/1. Its function is as follows. Catalyzes the ATP-dependent amidation of deamido-NAD to form NAD. Uses L-glutamine as a nitrogen source. The polypeptide is Glutamine-dependent NAD(+) synthetase (Xylella fastidiosa (strain Temecula1 / ATCC 700964)).